The following is a 257-amino-acid chain: Protein Cmaq_1209 (257 aa).

It belongs to the CinA family.

This is Protein Cmaq_1209 from Caldivirga maquilingensis (strain ATCC 700844 / DSM 13496 / JCM 10307 / IC-167).